A 161-amino-acid chain; its full sequence is C-type natriuretic peptide (161 aa).

Positions 1–22 (MFASRLAALGLLLLALVLDGKP) are cleaved as a signal peptide. Positions 19–135 (DGKPAPPPQP…GGGGSRRLKG (117 aa)) are disordered. The propeptide occupies 23-139 (APPPQPLRKA…SRRLKGLPKK (117 aa)). 2 stretches are compositionally biased toward low complexity: residues 29-60 (LRKA…SSGP) and 76-93 (AAPT…AASR). Over residues 94-104 (LLRDLRPDGKQ) the composition is skewed to basic and acidic residues. Gly residues predominate over residues 120–130 (GGGGGGGGGGS). Cys145 and Cys161 are joined by a disulfide.

This sequence belongs to the natriuretic peptide family. In terms of tissue distribution, expressed by the venom gland.

Its subcellular location is the secreted. Functionally, snake venom natriuretic peptide that has a vasorelaxant activity in rat aortic strips and a diuretic potency in anesthetized rats. May act by activating natriuretic receptors (NPR1 and/or NPR2). The protein is C-type natriuretic peptide of Rhabdophis tigrinus tigrinus (Tiger keelback snake).